The following is a 227-amino-acid chain: MPYPMQLGFQDATSPIMEELTYFHDHTLMIVFLISSLVLYIIILMLTTKLTHTSTMDAQEVETIWTILPAVILVLIALPSLRILYMMDEIYNPYLTIKAMGHQWYWSYEYTDYEDLTFDSYMIPTQELTPGQLRLLEVDNRVVLPMELPIRVLISSEDVIHAWTVPSLGLKADAIPGRLNQATLTSTRPGVYYGQCSEICGSNHSFMPIVLEMTTLKYFEKWSSMMQ.

Residues 1–14 (MPYPMQLGFQDATS) lie on the Mitochondrial intermembrane side of the membrane. The chain crosses the membrane as a helical span at residues 15–45 (PIMEELTYFHDHTLMIVFLISSLVLYIIILM). Residues 46-59 (LTTKLTHTSTMDAQ) lie on the Mitochondrial matrix side of the membrane. Residues 60 to 87 (EVETIWTILPAVILVLIALPSLRILYMM) traverse the membrane as a helical segment. The Mitochondrial intermembrane portion of the chain corresponds to 88 to 227 (DEIYNPYLTI…YFEKWSSMMQ (140 aa)). Cu cation-binding residues include His161, Cys196, Glu198, Cys200, His204, and Met207. Glu198 serves as a coordination point for Mg(2+). The residue at position 218 (Tyr218) is a Phosphotyrosine.

Belongs to the cytochrome c oxidase subunit 2 family. In terms of assembly, component of the cytochrome c oxidase (complex IV, CIV), a multisubunit enzyme composed of 14 subunits. The complex is composed of a catalytic core of 3 subunits MT-CO1, MT-CO2 and MT-CO3, encoded in the mitochondrial DNA, and 11 supernumerary subunits COX4I, COX5A, COX5B, COX6A, COX6B, COX6C, COX7A, COX7B, COX7C, COX8 and NDUFA4, which are encoded in the nuclear genome. The complex exists as a monomer or a dimer and forms supercomplexes (SCs) in the inner mitochondrial membrane with NADH-ubiquinone oxidoreductase (complex I, CI) and ubiquinol-cytochrome c oxidoreductase (cytochrome b-c1 complex, complex III, CIII), resulting in different assemblies (supercomplex SCI(1)III(2)IV(1) and megacomplex MCI(2)III(2)IV(2)). Found in a complex with TMEM177, COA6, COX18, COX20, SCO1 and SCO2. Interacts with TMEM177 in a COX20-dependent manner. Interacts with COX20. Interacts with COX16. Requires Cu cation as cofactor.

The protein resides in the mitochondrion inner membrane. It carries out the reaction 4 Fe(II)-[cytochrome c] + O2 + 8 H(+)(in) = 4 Fe(III)-[cytochrome c] + 2 H2O + 4 H(+)(out). In terms of biological role, component of the cytochrome c oxidase, the last enzyme in the mitochondrial electron transport chain which drives oxidative phosphorylation. The respiratory chain contains 3 multisubunit complexes succinate dehydrogenase (complex II, CII), ubiquinol-cytochrome c oxidoreductase (cytochrome b-c1 complex, complex III, CIII) and cytochrome c oxidase (complex IV, CIV), that cooperate to transfer electrons derived from NADH and succinate to molecular oxygen, creating an electrochemical gradient over the inner membrane that drives transmembrane transport and the ATP synthase. Cytochrome c oxidase is the component of the respiratory chain that catalyzes the reduction of oxygen to water. Electrons originating from reduced cytochrome c in the intermembrane space (IMS) are transferred via the dinuclear copper A center (CU(A)) of subunit 2 and heme A of subunit 1 to the active site in subunit 1, a binuclear center (BNC) formed by heme A3 and copper B (CU(B)). The BNC reduces molecular oxygen to 2 water molecules using 4 electrons from cytochrome c in the IMS and 4 protons from the mitochondrial matrix. The protein is Cytochrome c oxidase subunit 2 (MT-CO2) of Osphranter robustus (Wallaroo).